A 209-amino-acid chain; its full sequence is Lipid A acyltransferase PagP (209 aa).

The signal sequence occupies residues 1–24 (MHLKRALITLSLITLPIIPFSSYA). Catalysis depends on residues His81, Asp124, and Ser125.

Belongs to the lipid A palmitoyltransferase family. Homodimer.

The protein localises to the cell outer membrane. It catalyses the reaction a lipid A + a 1,2-diacyl-sn-glycero-3-phosphocholine = a hepta-acyl lipid A + a 2-acyl-sn-glycero-3-phosphocholine. The catalysed reaction is a lipid IVA + a 1,2-diacyl-sn-glycero-3-phosphocholine = a lipid IVB + a 2-acyl-sn-glycero-3-phosphocholine. It carries out the reaction a lipid IIA + a 1,2-diacyl-sn-glycero-3-phosphocholine = a lipid IIB + a 2-acyl-sn-glycero-3-phosphocholine. In terms of biological role, transfers a fatty acid residue from the sn-1 position of a phospholipid to the N-linked hydroxyfatty acid chain on the proximal unit of lipid A or its precursors. This Pectobacterium parmentieri (strain WPP163) (Pectobacterium wasabiae (strain WPP163)) protein is Lipid A acyltransferase PagP.